The following is a 98-amino-acid chain: NADH-ubiquinone oxidoreductase chain 4L (98 aa).

3 helical membrane-spanning segments follow: residues 1 to 21 (MSMV…GLLM), 29 to 49 (SLLC…VTIL), and 61 to 81 (IILL…LVMV).

The protein belongs to the complex I subunit 4L family. As to quaternary structure, core subunit of respiratory chain NADH dehydrogenase (Complex I) which is composed of 45 different subunits.

It is found in the mitochondrion inner membrane. It catalyses the reaction a ubiquinone + NADH + 5 H(+)(in) = a ubiquinol + NAD(+) + 4 H(+)(out). In terms of biological role, core subunit of the mitochondrial membrane respiratory chain NADH dehydrogenase (Complex I) which catalyzes electron transfer from NADH through the respiratory chain, using ubiquinone as an electron acceptor. Part of the enzyme membrane arm which is embedded in the lipid bilayer and involved in proton translocation. This chain is NADH-ubiquinone oxidoreductase chain 4L (MT-ND4L), found in Callorhinus ursinus (Northern fur seal).